Consider the following 205-residue polypeptide: Non-specific lipid transfer protein GPI-anchored 13 (205 aa).

Positions 1 to 24 (MESRKIKVMATAIALIMVAMVVDA) are cleaved as a signal peptide. 4 disulfides stabilise this stretch: cysteine 36–cysteine 77, cysteine 46–cysteine 61, cysteine 62–cysteine 104, and cysteine 75–cysteine 113. Asparagine 93, asparagine 137, and asparagine 165 each carry an N-linked (GlcNAc...) asparagine glycan. A disordered region spans residues 141-176 (SASAPTGSASEPTSMSSTPGSSAGNNSGRTTSVPGT). A lipid anchor (GPI-anchor amidated asparagine) is attached at asparagine 177. A propeptide spans 178-205 (HAQSFSKQWLGLEVVAHFFVIFYIFILV) (removed in mature form).

This sequence belongs to the plant LTP family. In terms of tissue distribution, expressed preferentially in expanding leaves and sepals, restricted to the distal side. Expressed at low levels in roots and stems.

The protein resides in the cell membrane. Probable lipid transfer protein. The protein is Non-specific lipid transfer protein GPI-anchored 13 of Arabidopsis thaliana (Mouse-ear cress).